We begin with the raw amino-acid sequence, 195 residues long: MPYGTRYPTLAFHTGGVGESDDGMPPQPFETFCYDSALLQAKIENFNIVPYTSVLPKELFGNIVPVDQCVKFFKHGAVLEVIMAGRGASTVEGTHAITTGVGICWGQDKNGELIGGWAAEYVEFFPTWINDEIAESHAKMWLKKSLQHELDLRSVVKHSEFQYFHNYINIKQKYGFSLTALGFLNFENADPVTIK.

Ser-53 carries the post-translational modification Pyruvic acid (Ser).

It belongs to the pyruvoyl-dependent arginine decarboxylase family. As to quaternary structure, trimer of an alpha-beta dimer. Pyruvate is required as a cofactor.

The protein localises to the cytoplasm. The enzyme catalyses L-arginine + H(+) = agmatine + CO2. Part of the AaxABC system, catalyzes the decarboxylation of L-arginine. The arginine uptake by the bacterium in the macrophage may be a virulence factor against the host innate immune response. This Chlamydia abortus (strain DSM 27085 / S26/3) (Chlamydophila abortus) protein is Pyruvoyl-dependent arginine decarboxylase AaxB (aaxB).